Reading from the N-terminus, the 364-residue chain is Anthranilate N-methyltransferase (364 aa).

A disordered region spans residues 1-20; that stretch reads MGSLSESHTQYKHGVEVEED. S-adenosyl-L-methionine-binding residues include Gly209, Asp232, Met253, and Lys266. Catalysis depends on His270, which acts as the Proton acceptor.

This sequence belongs to the class I-like SAM-binding methyltransferase superfamily. Cation-independent O-methyltransferase family. COMT subfamily. As to quaternary structure, homodimer. In terms of tissue distribution, expressed in leaves, flowers, stems and roots. Detected in the vascular tissues in stems, in the rhizodermis or the endodermis of roots, in the inside of carpels, in the central vascular bundles of the syncarp ovary and in the secretory oil glands located around the outer ovary wall.

The enzyme catalyses anthranilate + S-adenosyl-L-methionine = N-methylanthranilate + S-adenosyl-L-homocysteine + H(+). Inhibited by Ca(2+), Co(2+), Fe(2+), Fe(3+), Cu(2+) or Zn(2+). No effect of Mg(2+). In terms of biological role, involved in the biosynthesis of acridine alkaloids. N-methyltransferase with a strict substrate specificity for anthranilate. No activity with anthranilic acid methyl ester, anthraniloyl CoA, 3- or 4-amino-benzoic acid, salicylic acid, catechol, eugenol, caffeic acid, quercetin, theobromin, theophyllin, putrescine and nicotinic acid among others. The protein is Anthranilate N-methyltransferase of Ruta graveolens (Common rue).